The primary structure comprises 123 residues: Small ribosomal subunit protein uS12 (123 aa).

3-methylthioaspartic acid is present on aspartate 89. The segment at 100–123 (GSLDTSGVSDRKQGRSKYGTKRPK) is disordered. Over residues 113–123 (GRSKYGTKRPK) the composition is skewed to basic residues.

This sequence belongs to the universal ribosomal protein uS12 family. Part of the 30S ribosomal subunit. Contacts proteins S8 and S17. May interact with IF1 in the 30S initiation complex.

Its function is as follows. With S4 and S5 plays an important role in translational accuracy. Functionally, interacts with and stabilizes bases of the 16S rRNA that are involved in tRNA selection in the A site and with the mRNA backbone. Located at the interface of the 30S and 50S subunits, it traverses the body of the 30S subunit contacting proteins on the other side and probably holding the rRNA structure together. The combined cluster of proteins S8, S12 and S17 appears to hold together the shoulder and platform of the 30S subunit. This is Small ribosomal subunit protein uS12 from Saccharophagus degradans (strain 2-40 / ATCC 43961 / DSM 17024).